The following is a 353-amino-acid chain: S-adenosylmethionine:tRNA ribosyltransferase-isomerase (353 aa).

It belongs to the QueA family. In terms of assembly, monomer.

Its subcellular location is the cytoplasm. It catalyses the reaction 7-aminomethyl-7-carbaguanosine(34) in tRNA + S-adenosyl-L-methionine = epoxyqueuosine(34) in tRNA + adenine + L-methionine + 2 H(+). It functions in the pathway tRNA modification; tRNA-queuosine biosynthesis. Transfers and isomerizes the ribose moiety from AdoMet to the 7-aminomethyl group of 7-deazaguanine (preQ1-tRNA) to give epoxyqueuosine (oQ-tRNA). This Burkholderia vietnamiensis (strain G4 / LMG 22486) (Burkholderia cepacia (strain R1808)) protein is S-adenosylmethionine:tRNA ribosyltransferase-isomerase.